The primary structure comprises 878 residues: E3 ubiquitin-protein ligase SH3RF3 (878 aa).

Residues Arg-19–Asp-40 are disordered. The segment at Cys-52–Arg-93 adopts an RING-type zinc-finger fold. The tract at residues Pro-120–Gly-145 is disordered. 2 SH3 domains span residues Ser-187–Pro-246 and Gln-249–Ser-312. The segment at Arg-364 to Ala-433 is interaction with RAC1. Ser-395 carries the phosphoserine modification. The SH3 3 domain maps to Leu-458–Arg-519. Disordered regions lie at residues Gln-574 to Pro-659 and Pro-688 to Glu-758. Polar residues-rich tracts occupy residues Ala-590–Ser-609, Ala-618–Pro-633, Ala-643–Ala-653, and Ser-690–Asn-699. Residues Lys-703 to Ser-716 show a composition bias toward basic and acidic residues. The segment covering His-741 to Gln-752 has biased composition (polar residues). Ser-792 carries the phosphoserine modification. In terms of domain architecture, SH3 4 spans Leu-819–Phe-878.

This sequence belongs to the SH3RF family. Interacts (via SH3 domain 3) with PAK2. Interacts with RAC1 (GTP-bound form). Post-translationally, autoubiquitinated.

The enzyme catalyses S-ubiquitinyl-[E2 ubiquitin-conjugating enzyme]-L-cysteine + [acceptor protein]-L-lysine = [E2 ubiquitin-conjugating enzyme]-L-cysteine + N(6)-ubiquitinyl-[acceptor protein]-L-lysine.. It functions in the pathway protein modification; protein ubiquitination. In terms of biological role, has E3 ubiquitin-protein ligase activity. The sequence is that of E3 ubiquitin-protein ligase SH3RF3 (Sh3rf3) from Mus musculus (Mouse).